The following is a 349-amino-acid chain: B3 domain-containing protein At5g24050 (349 aa).

The segment at residues Phe-240 to Ser-341 is a DNA-binding region (TF-B3).

Its subcellular location is the nucleus. The sequence is that of B3 domain-containing protein At5g24050 from Arabidopsis thaliana (Mouse-ear cress).